The chain runs to 367 residues: tRNA/tmRNA (uracil-C(5))-methyltransferase (367 aa).

Gln190, Tyr218, Asn223, Glu239, and Asp299 together coordinate S-adenosyl-L-methionine. Cys324 serves as the catalytic Nucleophile. The active-site Proton acceptor is Glu358.

It belongs to the class I-like SAM-binding methyltransferase superfamily. RNA M5U methyltransferase family. TrmA subfamily.

It catalyses the reaction uridine(54) in tRNA + S-adenosyl-L-methionine = 5-methyluridine(54) in tRNA + S-adenosyl-L-homocysteine + H(+). The enzyme catalyses uridine(341) in tmRNA + S-adenosyl-L-methionine = 5-methyluridine(341) in tmRNA + S-adenosyl-L-homocysteine + H(+). In terms of biological role, dual-specificity methyltransferase that catalyzes the formation of 5-methyluridine at position 54 (m5U54) in all tRNAs, and that of position 341 (m5U341) in tmRNA (transfer-mRNA). In Erwinia tasmaniensis (strain DSM 17950 / CFBP 7177 / CIP 109463 / NCPPB 4357 / Et1/99), this protein is tRNA/tmRNA (uracil-C(5))-methyltransferase.